A 282-amino-acid polypeptide reads, in one-letter code: MRLDVVTIFPEYLEPLRHALLGKAIEQGILSVGVHNLRAWTNDVHQSVDSTPCGGGPGMVMKPEVWGPALDDVAAGTGPAATVSDLESSAEHKRNLRPATTNGDAEPLGEKAGGVTKPLLIVPTPAGKPFTQDMAERWSTEEHVVFACGRYEGIDQRVVEDAHNRYRVEEVSIGDYVLIGGEVAVLVMAEAMVRLIPGVLGNQASHQEDSFQDGLLEGPSYTRPRQWRGLDVPDVLFSGNHAKIAQWRREQSLARTKKIRPDLLDSVELSKADRAYLDGLEL.

Residues 77–114 (TGPAATVSDLESSAEHKRNLRPATTNGDAEPLGEKAGG) form a disordered region. S-adenosyl-L-methionine-binding positions include Gly-149 and 173-178 (IGDYVL).

This sequence belongs to the RNA methyltransferase TrmD family. Homodimer.

It is found in the cytoplasm. It carries out the reaction guanosine(37) in tRNA + S-adenosyl-L-methionine = N(1)-methylguanosine(37) in tRNA + S-adenosyl-L-homocysteine + H(+). Functionally, specifically methylates guanosine-37 in various tRNAs. The polypeptide is tRNA (guanine-N(1)-)-methyltransferase (Corynebacterium jeikeium (strain K411)).